We begin with the raw amino-acid sequence, 402 residues long: Phosphoglycerate kinase (402 aa).

Residues Asp21 to Asn23, Arg36, His59 to Arg62, Arg114, and Arg147 each bind substrate. ATP contacts are provided by residues Lys202, Glu329, and Gly355 to Thr358.

This sequence belongs to the phosphoglycerate kinase family. As to quaternary structure, monomer.

It is found in the cytoplasm. It carries out the reaction (2R)-3-phosphoglycerate + ATP = (2R)-3-phospho-glyceroyl phosphate + ADP. It functions in the pathway carbohydrate degradation; glycolysis; pyruvate from D-glyceraldehyde 3-phosphate: step 2/5. This chain is Phosphoglycerate kinase, found in Psychrobacter sp. (strain PRwf-1).